A 312-amino-acid polypeptide reads, in one-letter code: Ribonuclease Z (312 aa).

Residues histidine 62, histidine 64, aspartate 66, histidine 67, histidine 144, aspartate 215, and histidine 273 each contribute to the Zn(2+) site. Residue aspartate 66 is the Proton acceptor of the active site.

Belongs to the RNase Z family. As to quaternary structure, homodimer. Zn(2+) is required as a cofactor.

The catalysed reaction is Endonucleolytic cleavage of RNA, removing extra 3' nucleotides from tRNA precursor, generating 3' termini of tRNAs. A 3'-hydroxy group is left at the tRNA terminus and a 5'-phosphoryl group is left at the trailer molecule.. Functionally, zinc phosphodiesterase, which displays some tRNA 3'-processing endonuclease activity. Probably involved in tRNA maturation, by removing a 3'-trailer from precursor tRNA. This Prochlorococcus marinus (strain MIT 9215) protein is Ribonuclease Z.